A 284-amino-acid polypeptide reads, in one-letter code: Pseudopaline exporter CntI (284 aa).

10 consecutive transmembrane segments (helical) span residues 2–22 (VLDLLKSGVLLAVLASFTFSV), 34–54 (LPAAEIVFFRSAIGTLLIYLL), 74–94 (GVMGALYLVCYFYAIAHIPLA), 96–116 (ASILAHMSPFFVILFSALFLG), 122–142 (AVYWLLLVVVLGALMIVKPFS), 147–167 (SVYAVVGLLSAVFAAGASVAI), 179–199 (IVFYFLAVATLVAIPLMWSDF), 209–229 (GLLLAIGVVSLLGQVFLTRAF), 236–256 (IVAVTRYIGIVFNAGWGWLFW), and 259–279 (VPDALTIAGGVLIVVACIALS). EamA domains are found at residues 8 to 138 (SGVL…LMIV) and 151 to 279 (VVGL…IALS).

This sequence belongs to the EamA transporter family.

The protein resides in the cell inner membrane. Transports the metallophore pseudopaline, which is involved in the acquisition of nickel and zinc, and thus enables bacterial growth inside the host, where metal access is limited. Is probably involved in the export of pseudopaline. This chain is Pseudopaline exporter CntI, found in Pseudomonas aeruginosa (strain UCBPP-PA14).